Reading from the N-terminus, the 619-residue chain is Chaperone protein HscA homolog (619 aa).

This sequence belongs to the heat shock protein 70 family.

In terms of biological role, chaperone involved in the maturation of iron-sulfur cluster-containing proteins. Has a low intrinsic ATPase activity which is markedly stimulated by HscB. The chain is Chaperone protein HscA homolog from Shewanella denitrificans (strain OS217 / ATCC BAA-1090 / DSM 15013).